A 999-amino-acid polypeptide reads, in one-letter code: Testis anion transporter 1 (999 aa).

Residues 1-93 lie on the Cytoplasmic side of the membrane; sequence MQTERSLQSF…YRFKDWLLGD (93 aa). A helical membrane pass occupies residues 94-114; it reads LLAGLSVGLVQVPQGLILSLL. Residues 115-117 lie on the Extracellular side of the membrane; that stretch reads TRQ. The helical transmembrane segment at 118–138 threads the bilayer; it reads LIPPLNVTYAAFCSSVIYVIF. Residue Gly139 is a topological domain, cytoplasmic. A helical membrane pass occupies residues 140-160; the sequence is SCHQMSIGPFFLVSALMINVL. Residues 161-200 lie on the Extracellular side of the membrane; it reads KDRPFNNGHLILGTFVKDDFSVPTFYLSYNRSLSMVASTT. N-linked (GlcNAc...) asparagine glycosylation occurs at Asn190. Residues 201–221 form a helical membrane-spanning segment; it reads FLTGIIQLSMGMLGMGFMATY. Residues 222-230 are Cytoplasmic-facing; that stretch reads LPEAATSAY. Residues 231 to 251 form a helical membrane-spanning segment; sequence LAAVALHIILAQMTCILGIMV. The Extracellular segment spans residues 252–268; that stretch reads SFHAGPISFIYNIINYC. Residues 269-289 form a helical membrane-spanning segment; sequence IALPKANSTSILLFITSVVAL. Topologically, residues 290-305 are cytoplasmic; it reads RINKCIRITFNRYPIE. Residues 306-326 traverse the membrane as a helical segment; that stretch reads FPMELLLILGFSLLTSKITMA. Topologically, residues 327–354 are extracellular; it reads TENSKMLMNMIPYSFVFPENPEFGILSR. A helical membrane pass occupies residues 355–375; that stretch reads VVLQALSLSFVSSFLLISLGK. Residues 376–390 are Cytoplasmic-facing; sequence KIANFHNYRTNSNQD. Residues 391–411 form a helical membrane-spanning segment; the sequence is LIAIGLCNLLSSFFKCCVFTG. Residues 412–427 lie on the Extracellular side of the membrane; that stretch reads SLSRTTIQDKSGGRQQ. Residues 428–448 traverse the membrane as a helical segment; it reads FASLVGAGVMLLLMVKMESFF. Residues 449–453 lie on the Cytoplasmic side of the membrane; that stretch reads HNLPN. A helical transmembrane segment spans residues 454 to 474; it reads AVLAGIILSNVVPYLEAIYNL. Residues 475 to 494 are Extracellular-facing; that stretch reads PSLWRQDQYECIIWMVTFSS. Residues 495 to 515 traverse the membrane as a helical segment; sequence AILLGLDVGLLISLAFTFFVI. At 516–544 the chain is on the cytoplasmic side; sequence TIRSHRTKILVLGQIPNTNIYRNVNDYRE. In terms of domain architecture, STAS spans 541 to 796; the sequence is DYREVILIPG…LSLHDAVLFA (256 aa). The chain crosses the membrane as a helical span at residues 545–565; that stretch reads VILIPGVKIFQCCSSITFVNV. The Extracellular segment spans residues 566–999; the sequence is YHLKQKVLKE…RKPHNYPNSP (434 aa). The interval 661–999 is interaction with RACGAP1; it reads TVSSTSQRNI…RKPHNYPNSP (339 aa). Disordered stretches follow at residues 678-701 and 893-999; these read EKAW…SESL and SELD…PNSP. The span at 684–696 shows a compositional bias: pro residues; that stretch reads NSPPRNSPLPPPE. Acidic residues-rich tracts occupy residues 893-903 and 912-947; these read SELDPGSELDS and ELES…EPEP. Positions 973–982 are enriched in polar residues; that stretch reads GSSNSQSRAP.

It belongs to the SLC26A/SulP transporter (TC 2.A.53) family. Interacts with RACGAP1. Interacts with CFTR; stimulates anion transport activity of CFTR. In terms of processing, N-glycosylated. As to expression, expressed in testis and epididymis. Located at the end of the midpiece of the flagella, known as the annulus, in spermatozoa.

The protein localises to the membrane. The enzyme catalyses sulfate(out) + chloride(in) = sulfate(in) + chloride(out). The catalysed reaction is oxalate(in) + chloride(out) = oxalate(out) + chloride(in). Functionally, antiporter that mediates the exchange of sulfate and oxalate against chloride ions across a membrane. Stimulates anion transport activity of CFTR. May cooperate with CFTR in the regulation of chloride and bicarbonate ions fluxes required for activation of the ADCY10/PKA pathway during sperm motility and sperm capacitation. May play a role in sperm tail differentiation and motility and hence male fertility. The sequence is that of Testis anion transporter 1 from Mus musculus (Mouse).